We begin with the raw amino-acid sequence, 379 residues long: Mating-type protein MAT-1 (379 aa).

A DNA-binding region (alpha box) is located at residues Arg60–Arg117.

The protein belongs to the MATALPHA1 family.

It is found in the nucleus. Functionally, mating type proteins are sequence specific DNA-binding proteins that act as master switches in fungal differentiation by controlling gene expression in a cell type-specific fashion. Transcriptional activator that induces the transcription of alpha-specific genes. The chain is Mating-type protein MAT-1 (MAT1) from Curvularia kusanoi (Cochliobolus kusanoi).